The sequence spans 380 residues: Alcohol dehydrogenase 1 (380 aa).

Zn(2+) is bound by residues C48, T50, H70, C100, C103, C106, C114, and C178. An alcohol contacts are provided by T50 and H70. NAD(+) is bound at residue T50. Residues 203–208 (GLGAVG), D227, R232, T273, V296, 296–298 (VGV), and R373 each bind NAD(+).

It belongs to the zinc-containing alcohol dehydrogenase family. As to quaternary structure, homodimer. Requires Zn(2+) as cofactor.

It is found in the cytoplasm. It catalyses the reaction a primary alcohol + NAD(+) = an aldehyde + NADH + H(+). The enzyme catalyses a secondary alcohol + NAD(+) = a ketone + NADH + H(+). This Pisum sativum (Garden pea) protein is Alcohol dehydrogenase 1.